The following is a 516-amino-acid chain: Multicopper oxidase CueO (516 aa).

Residues 1–28 (MQRRDFLKYSVALGVASALPLWSRAVFA) constitute a signal peptide (tat-type signal). 3 consecutive Plastocyanin-like domains span residues 55–165 (GQST…IEDD), 227–292 (PRGW…DNKP), and 399–516 (GGKF…GFTV). 4 residues coordinate Cu cation: histidine 101, histidine 103, histidine 141, and histidine 143. 7 residues coordinate Cu cation: histidine 443, histidine 446, histidine 448, histidine 499, cysteine 500, histidine 501, and histidine 505.

The protein belongs to the multicopper oxidase family. Monomer. Requires Cu cation as cofactor. Predicted to be exported by the Tat system. The position of the signal peptide cleavage has not been experimentally proven.

It localises to the periplasm. The enzyme catalyses 4 Cu(+) + O2 + 4 H(+) = 4 Cu(2+) + 2 H2O. Functionally, multicopper oxidase involved in copper homeostasis and copper tolerance under aerobic conditions. Is responsible for the oxidation of Cu(+) to the less harmful Cu(2+) in the periplasm, thereby preventing Cu(+) from entering the cytoplasm. The sequence is that of Multicopper oxidase CueO (cueO) from Escherichia coli O157:H7.